The primary structure comprises 199 residues: Recombination protein RecR (199 aa).

The segment at 57–72 (CNLCNNFSEQEICPLC) adopts a C4-type zinc-finger fold. The 96-residue stretch at 80-175 (TLLCIVEMPS…QVSRIARGLP (96 aa)) folds into the Toprim domain.

It belongs to the RecR family.

Functionally, may play a role in DNA repair. It seems to be involved in an RecBC-independent recombinational process of DNA repair. It may act with RecF and RecO. The chain is Recombination protein RecR from Methylobacillus flagellatus (strain ATCC 51484 / DSM 6875 / VKM B-1610 / KT).